Here is a 199-residue protein sequence, read N- to C-terminus: Holliday junction branch migration complex subunit RuvA (199 aa).

Residues 1 to 64 (MIARLTGMLA…EDAISLFGFR (64 aa)) are domain I. Residues 65-143 (TVAEKEFFQV…KMDVAPSTKE (79 aa)) form a domain II region. The flexible linker stretch occupies residues 144-154 (AAPSEAPPEVA). The domain III stretch occupies residues 154-199 (ADDVASALVNLGYKEAVVRKVLAEMAIESGASTEAVLRQALKILMK).

The protein belongs to the RuvA family. In terms of assembly, homotetramer. Forms an RuvA(8)-RuvB(12)-Holliday junction (HJ) complex. HJ DNA is sandwiched between 2 RuvA tetramers; dsDNA enters through RuvA and exits via RuvB. An RuvB hexamer assembles on each DNA strand where it exits the tetramer. Each RuvB hexamer is contacted by two RuvA subunits (via domain III) on 2 adjacent RuvB subunits; this complex drives branch migration. In the full resolvosome a probable DNA-RuvA(4)-RuvB(12)-RuvC(2) complex forms which resolves the HJ.

The protein resides in the cytoplasm. In terms of biological role, the RuvA-RuvB-RuvC complex processes Holliday junction (HJ) DNA during genetic recombination and DNA repair, while the RuvA-RuvB complex plays an important role in the rescue of blocked DNA replication forks via replication fork reversal (RFR). RuvA specifically binds to HJ cruciform DNA, conferring on it an open structure. The RuvB hexamer acts as an ATP-dependent pump, pulling dsDNA into and through the RuvAB complex. HJ branch migration allows RuvC to scan DNA until it finds its consensus sequence, where it cleaves and resolves the cruciform DNA. This chain is Holliday junction branch migration complex subunit RuvA, found in Geobacter metallireducens (strain ATCC 53774 / DSM 7210 / GS-15).